The chain runs to 350 residues: Biotin synthase (350 aa).

The Radical SAM core domain maps to 38 to 265 (NHVQVSTLLS…MSAVRLSAGR (228 aa)). Cysteine 53, cysteine 57, and cysteine 60 together coordinate [4Fe-4S] cluster. Positions 97, 128, 188, and 260 each coordinate [2Fe-2S] cluster.

It belongs to the radical SAM superfamily. Biotin synthase family. Homodimer. The cofactor is [4Fe-4S] cluster. [2Fe-2S] cluster is required as a cofactor.

The enzyme catalyses (4R,5S)-dethiobiotin + (sulfur carrier)-SH + 2 reduced [2Fe-2S]-[ferredoxin] + 2 S-adenosyl-L-methionine = (sulfur carrier)-H + biotin + 2 5'-deoxyadenosine + 2 L-methionine + 2 oxidized [2Fe-2S]-[ferredoxin]. It functions in the pathway cofactor biosynthesis; biotin biosynthesis; biotin from 7,8-diaminononanoate: step 2/2. Its function is as follows. Catalyzes the conversion of dethiobiotin (DTB) to biotin by the insertion of a sulfur atom into dethiobiotin via a radical-based mechanism. The chain is Biotin synthase from Vibrio atlanticus (strain LGP32) (Vibrio splendidus (strain Mel32)).